The sequence spans 382 residues: 1-deoxy-D-xylulose 5-phosphate reductoisomerase (382 aa).

NADPH-binding residues include Thr-10, Gly-11, Ser-12, Ile-13, Gly-36, and Asn-122. Position 123 (Lys-123) interacts with 1-deoxy-D-xylulose 5-phosphate. Position 124 (Glu-124) interacts with NADPH. Asp-148 lines the Mn(2+) pocket. Residues Ser-149, Glu-150, Ser-174, and His-197 each coordinate 1-deoxy-D-xylulose 5-phosphate. Residue Glu-150 participates in Mn(2+) binding. Residue Gly-203 participates in NADPH binding. Positions 210, 215, 216, and 219 each coordinate 1-deoxy-D-xylulose 5-phosphate. Glu-219 contacts Mn(2+).

The protein belongs to the DXR family. It depends on Mg(2+) as a cofactor. The cofactor is Mn(2+).

The enzyme catalyses 2-C-methyl-D-erythritol 4-phosphate + NADP(+) = 1-deoxy-D-xylulose 5-phosphate + NADPH + H(+). Its pathway is isoprenoid biosynthesis; isopentenyl diphosphate biosynthesis via DXP pathway; isopentenyl diphosphate from 1-deoxy-D-xylulose 5-phosphate: step 1/6. Functionally, catalyzes the NADPH-dependent rearrangement and reduction of 1-deoxy-D-xylulose-5-phosphate (DXP) to 2-C-methyl-D-erythritol 4-phosphate (MEP). This chain is 1-deoxy-D-xylulose 5-phosphate reductoisomerase, found in Prosthecochloris aestuarii (strain DSM 271 / SK 413).